The chain runs to 120 residues: UPF0342 protein Csac_0863 (120 aa).

The protein belongs to the UPF0342 family.

In Caldicellulosiruptor saccharolyticus (strain ATCC 43494 / DSM 8903 / Tp8T 6331), this protein is UPF0342 protein Csac_0863.